We begin with the raw amino-acid sequence, 717 residues long: Delta-like protein D (717 aa).

A signal peptide spans 1-19 (MGRLMIAVLLCVMISQGFC). Topologically, residues 20 to 547 (SGVFELKLQE…EEDDGGFPWT (528 aa)) are extracellular. Residues 175-219 (FVCDEHYYGEGCSVFCRPRDDTFGHFTCGERGEIICNSGWKGQYC) enclose the DSL domain. Intrachain disulfides connect cysteine 177–cysteine 186, cysteine 190–cysteine 202, cysteine 210–cysteine 219, cysteine 224–cysteine 235, cysteine 228–cysteine 241, cysteine 243–cysteine 252, cysteine 261–cysteine 266, cysteine 274–cysteine 283, cysteine 290–cysteine 302, cysteine 296–cysteine 312, cysteine 314–cysteine 323, cysteine 330–cysteine 341, cysteine 335–cysteine 350, cysteine 352–cysteine 361, cysteine 368–cysteine 379, cysteine 373–cysteine 389, cysteine 391–cysteine 400, cysteine 407–cysteine 418, cysteine 412–cysteine 427, cysteine 429–cysteine 438, cysteine 445–cysteine 456, cysteine 450–cysteine 465, cysteine 467–cysteine 476, cysteine 483–cysteine 494, cysteine 488–cysteine 503, and cysteine 505–cysteine 514. EGF-like domains follow at residues 220-253 (TEPI…KYCD), 257-284 (RYPG…LFCN), and 286-324 (DLNY…DSCE). Residues 326 to 362 (EVNECSGSPCRNGGSCTDLENTYSCTCPPGFYGRNCE) form the EGF-like 4; calcium-binding domain. EGF-like domains follow at residues 364–401 (SAMT…FNCE) and 403–439 (KIDH…THCE). An EGF-like 7; calcium-binding domain is found at 441–477 (NIDECATYPCQNGGTCQDGLSDYTCTCPPGYTGKNCT). A glycan (N-linked (GlcNAc...) asparagine) is linked at asparagine 475. Residues 479–515 (AVNKCLHNPCHNGATCHEMDNRYVCACIPGYGGRNCQ) enclose the EGF-like 8 domain. The helical transmembrane segment at 548–568 (AVCAGIILVLLVLIGGSVFVI) threads the bilayer. Residues 569–717 (YIRLKLQQRS…KDECIIATEV (149 aa)) are Cytoplasmic-facing. The segment at 649–693 (EDLGKEDSERSEATKCEPLDSDSEEKHRNHLKSDSSERKRTESLC) is disordered.

Interacts with mib. In terms of processing, ubiquitinated by mib, leading to its endocytosis and subsequent degradation. Expressed in both mesodermal and neuroectodermal regions. In the developing nervous system, it is expressed in overlapping regions with deltaB (dlb) and deltaA (dla); in the neural plate, dld is expressed in patches of contiguous cells with dla, while dlb is confined to scattered cells within those patches that will differentiate as neurons. In somites, it marks the anterior part of each formed somite, while deltaC (dlc) marks the posterior part. In 24 hours embryos, expressed in the hindbrain in stripes adjacent to rhombomere boundaries, but not in the actual boundary cells.

The protein localises to the membrane. Functionally, acts as a ligand for Notch receptors and is involved in primary neurogenesis and somitogenesis. Can activate Notch receptors, thereby playing a key role in lateral inhibition, a process that prevents the immediate neighbors of each nascent neural cell from simultaneously embarking on neural differentiation. Required in somite segmentation to keep the oscillations of neighboring presomitic mesoderm cells synchronized. The sequence is that of Delta-like protein D (dld) from Danio rerio (Zebrafish).